We begin with the raw amino-acid sequence, 127 residues long: Aspartate 1-decarboxylase (127 aa).

Ser25 serves as the catalytic Schiff-base intermediate with substrate; via pyruvic acid. Pyruvic acid (Ser) is present on Ser25. Residue Thr57 participates in substrate binding. The active-site Proton donor is Tyr58. 73-75 contributes to the substrate binding site; it reads GAA.

It belongs to the PanD family. In terms of assembly, heterooctamer of four alpha and four beta subunits. Pyruvate serves as cofactor. Post-translationally, is synthesized initially as an inactive proenzyme, which is activated by self-cleavage at a specific serine bond to produce a beta-subunit with a hydroxyl group at its C-terminus and an alpha-subunit with a pyruvoyl group at its N-terminus.

The protein resides in the cytoplasm. It catalyses the reaction L-aspartate + H(+) = beta-alanine + CO2. Its pathway is cofactor biosynthesis; (R)-pantothenate biosynthesis; beta-alanine from L-aspartate: step 1/1. In terms of biological role, catalyzes the pyruvoyl-dependent decarboxylation of aspartate to produce beta-alanine. This Listeria innocua serovar 6a (strain ATCC BAA-680 / CLIP 11262) protein is Aspartate 1-decarboxylase.